The sequence spans 181 residues: Ribulose bisphosphate carboxylase small subunit, chloroplastic (181 aa).

A chloroplast-targeting transit peptide spans methionine 1–serine 54.

The protein belongs to the RuBisCO small chain family. In terms of assembly, heterohexadecamer of 8 large and 8 small subunits.

It localises to the plastid. The protein resides in the chloroplast. Functionally, ruBisCO catalyzes two reactions: the carboxylation of D-ribulose 1,5-bisphosphate, the primary event in carbon dioxide fixation, as well as the oxidative fragmentation of the pentose substrate. Both reactions occur simultaneously and in competition at the same active site. Although the small subunit is not catalytic it is essential for maximal activity. The chain is Ribulose bisphosphate carboxylase small subunit, chloroplastic from Raphanus sativus (Radish).